A 498-amino-acid chain; its full sequence is Cytochrome P450 71B24 (498 aa).

A helical transmembrane segment spans residues 1 to 21 (MSILLYFIALLSLIIIKKIKD). A heme-binding site is contributed by Cys442.

This sequence belongs to the cytochrome P450 family. It depends on heme as a cofactor.

It localises to the membrane. The sequence is that of Cytochrome P450 71B24 (CYP71B24) from Arabidopsis thaliana (Mouse-ear cress).